A 397-amino-acid chain; its full sequence is Chalcone synthase 2 (397 aa).

The active site involves C168.

The protein belongs to the thiolase-like superfamily. Chalcone/stilbene synthases family.

It carries out the reaction (E)-4-coumaroyl-CoA + 3 malonyl-CoA + 3 H(+) = 2',4,4',6'-tetrahydroxychalcone + 3 CO2 + 4 CoA. It participates in secondary metabolite biosynthesis; flavonoid biosynthesis. Functionally, the primary product of this enzyme is 4,2',4',6'-tetrahydroxychalcone (also termed naringenin-chalcone or chalcone) which can under specific conditions spontaneously isomerize into naringenin. The protein is Chalcone synthase 2 (CHS2) of Daucus carota (Wild carrot).